The primary structure comprises 461 residues: Kynureninase (461 aa).

Pyridoxal 5'-phosphate contacts are provided by residues Leu-114, Thr-115, 142–145 (FPSD), Asp-228, His-231, and Tyr-253. Residue Lys-254 is modified to N6-(pyridoxal phosphate)lysine. Pyridoxal 5'-phosphate is bound by residues Trp-288 and Asn-316.

The protein belongs to the kynureninase family. Homodimer. Pyridoxal 5'-phosphate serves as cofactor.

The protein localises to the cytoplasm. It catalyses the reaction L-kynurenine + H2O = anthranilate + L-alanine + H(+). The catalysed reaction is 3-hydroxy-L-kynurenine + H2O = 3-hydroxyanthranilate + L-alanine + H(+). It participates in amino-acid degradation; L-kynurenine degradation; L-alanine and anthranilate from L-kynurenine: step 1/1. The protein operates within cofactor biosynthesis; NAD(+) biosynthesis; quinolinate from L-kynurenine: step 2/3. Catalyzes the cleavage of L-kynurenine (L-Kyn) and L-3-hydroxykynurenine (L-3OHKyn) into anthranilic acid (AA) and 3-hydroxyanthranilic acid (3-OHAA), respectively. This chain is Kynureninase, found in Candida albicans (strain SC5314 / ATCC MYA-2876) (Yeast).